A 317-amino-acid chain; its full sequence is Olfactory receptor 51Q1 (317 aa).

Residues 1 to 27 (MSQVTNTTQEGIYFILTDIPGFEASHI) are Extracellular-facing. Asn-6 is a glycosylation site (N-linked (GlcNAc...) asparagine). Residues 28–48 (WISIPVCCLYTISIMGNTTIL) form a helical membrane-spanning segment. Topologically, residues 49-56 (TVIRTEPS) are cytoplasmic. A helical transmembrane segment spans residues 57 to 77 (VHQRMYLFLSMLALTDLGLTL). The Extracellular portion of the chain corresponds to 78-101 (TTLPTVMQLLWFNVRRISSEACFA). Residues Cys-99 and Cys-191 are joined by a disulfide bond. A helical membrane pass occupies residues 102-122 (QFFFLHGFSFMESSVLLAMSV). The Cytoplasmic segment spans residues 123–141 (DCYVAICCPLHYASILTNE). Residues 142–162 (VIGRTGLAIICCCVLAVLPSL) traverse the membrane as a helical segment. Topologically, residues 163 to 198 (FLLKRLPFCHSHLLSRSYCLHQDMIRLVCADIRLNS) are extracellular. The chain crosses the membrane as a helical span at residues 199–219 (WYGFALALLIIIVDPLLIVIS). Over 220 to 239 (YTLILKNILGTATWAERLRA) the chain is Cytoplasmic. The chain crosses the membrane as a helical span at residues 240–260 (LNNCLSHILAVLVLYIPMVGV). The Extracellular portion of the chain corresponds to 261–275 (SMTHRFAKHASPLVH). Residues 276 to 296 (VIMANIYLLAPPVMNPIIYSV) form a helical membrane-spanning segment. Topologically, residues 297-317 (KNKQIQWGMLNFLSLKNMHSR) are cytoplasmic.

It belongs to the G-protein coupled receptor 1 family.

It is found in the cell membrane. Functionally, odorant receptor. The chain is Olfactory receptor 51Q1 (OR51Q1) from Homo sapiens (Human).